The following is a 533-amino-acid chain: MALRNVPFRSEVLGWDPDSLADYFKKLNYKDCEKAVKKYHIDGARFLNLTENDIQKFPKLRVPILSKLSQEINKNEERRSIFTRKPQVPRFPEETESHEEDNGGWSSFEEDDYESPNDDQDGEDDGDYESPNEEEEAPVEDDADYEPPPSNDEEALQNSILPAKPFPNSNSMYIDRPPSGKTPQQPPVPPQRPMAALPPPPAGRNHSPLPPPQTNHEEPSRSRNHKTAKLPAPSIDRSTKPPLDRSLAPFDREPFTLGKKPPFSDKPSIPAGRSLGEHLPKIQKPPLPPTTERHERSSPLPGKKPPVPKHGWGPDRRENDEDDVHQRPLPQPALLPMSSNTFPSRSTKPSPMNPLPSSHMPGAFSESNSSFPQSASLPPYFSQGPSNRPPIRAEGRNFPLPLPNKPRPPSPAEEENSLNEEWYVSYITRPEAEAALRKINQDGTFLVRDSSKKTTTNPYVLMVLYKDKVYNIQIRYQKESQVYLLGTGLRGKEDFLSVSDIIDYFRKMPLLLIDGKNRGSRYQCTLTHAAGYP.

The 67-residue stretch at 15-81 folds into the SAM domain; the sequence is WDPDSLADYF…INKNEERRSI (67 aa). At Y23 the chain carries Phosphotyrosine. The interval 78-417 is disordered; that stretch reads RRSIFTRKPQ…PPSPAEEENS (340 aa). Acidic residues predominate over residues 108–155; the sequence is FEEDDYESPNDDQDGEDDGDYESPNEEEEAPVEDDADYEPPPSNDEEA. Pro residues predominate over residues 184-213; sequence QQPPVPPQRPMAALPPPPAGRNHSPLPPPQ. Residue S207 is modified to Phosphoserine. Polar residues-rich tracts occupy residues 337 to 350 and 365 to 376; these read MSSN…TKPS and SESNSSFPQSAS. 2 positions are modified to phosphoserine: S376 and S410. Over residues 400 to 411 the composition is skewed to pro residues; the sequence is LPLPNKPRPPSP. The region spanning 422-530 is the SH2 domain; it reads WYVSYITRPE…RYQCTLTHAA (109 aa).

As to quaternary structure, interacts with SLA. Interacts with CBLB. Interacts with GRB2. Interacts with SHB. Interacts with PRAM1. Interacts (via SH2 domain) with CD6 (via tyrosine phosphorylated C-terminus). Interacts with FYB1 and the phosphorylated form of FYB2. Interacts with 14-3-3 adapter/YWHAZ; this phosphorylation leads to YWHAZ proteolytic degradation. Interacts with VAV1; this interaction plays a role in TCR-mediated cytokine production. Interacts with AGER; this interaction plays an important role in AGER-mediated pro-inflammatory responses and cytokine release. Post-translationally, phosphorylated after T-cell receptor activation by ZAP70, ITK and TXK, which leads to the up-regulation of Th1 preferred cytokine IL-2. SYK-dependent phosphorylation is required for recruitment of PI3K signaling components. In terms of tissue distribution, highly expressed in spleen, thymus and peripheral blood leukocytes. Highly expressed also in T-cell and monocytic cell lines, expressed at lower level in B-cell lines. Not detected in fibroblast or neuroblastoma cell lines.

Its subcellular location is the cytoplasm. Adapter protein primarily involved in signaling pathways within T-cells, as well as other immune cells such as platelets, mast cells, and natural killer (NK) cells. Plays a crucial role for transducing signal from the T-cell receptor (TCR) after antigen recognition leading to T-cell activation. Mechanistically, once phosphorylated by the kinase ZAP70, mediates interactions with the guanine-nucleotide exchange factor VAV1, the adapter protein NCK and the kinase ITK. In turn, stimulates the activation of PKC-theta/PRKCQ and NF-kappa-B transcriptional activity in response to CD3 and CD28 costimulation. Also plays an essential role in AGER-induced signaling pathways including p38 MAPK and ERK1/2 activation leading to cytokine release and pro-inflammatory responses. This chain is Lymphocyte cytosolic protein 2 (LCP2), found in Homo sapiens (Human).